The primary structure comprises 615 residues: Dihydroxy-acid dehydratase (615 aa).

Aspartate 85 provides a ligand contact to Mg(2+). Position 126 (cysteine 126) interacts with [2Fe-2S] cluster. 2 residues coordinate Mg(2+): aspartate 127 and lysine 128. An N6-carboxylysine modification is found at lysine 128. Cysteine 199 serves as a coordination point for [2Fe-2S] cluster. Glutamate 495 provides a ligand contact to Mg(2+). Serine 521 serves as the catalytic Proton acceptor.

This sequence belongs to the IlvD/Edd family. In terms of assembly, homodimer. [2Fe-2S] cluster serves as cofactor. It depends on Mg(2+) as a cofactor.

It catalyses the reaction (2R)-2,3-dihydroxy-3-methylbutanoate = 3-methyl-2-oxobutanoate + H2O. It carries out the reaction (2R,3R)-2,3-dihydroxy-3-methylpentanoate = (S)-3-methyl-2-oxopentanoate + H2O. The protein operates within amino-acid biosynthesis; L-isoleucine biosynthesis; L-isoleucine from 2-oxobutanoate: step 3/4. It participates in amino-acid biosynthesis; L-valine biosynthesis; L-valine from pyruvate: step 3/4. In terms of biological role, functions in the biosynthesis of branched-chain amino acids. Catalyzes the dehydration of (2R,3R)-2,3-dihydroxy-3-methylpentanoate (2,3-dihydroxy-3-methylvalerate) into 2-oxo-3-methylpentanoate (2-oxo-3-methylvalerate) and of (2R)-2,3-dihydroxy-3-methylbutanoate (2,3-dihydroxyisovalerate) into 2-oxo-3-methylbutanoate (2-oxoisovalerate), the penultimate precursor to L-isoleucine and L-valine, respectively. The chain is Dihydroxy-acid dehydratase from Mannheimia succiniciproducens (strain KCTC 0769BP / MBEL55E).